Reading from the N-terminus, the 123-residue chain is Small ribosomal subunit protein uS13 (123 aa).

Positions Ala-94–Lys-123 are disordered. A compositionally biased stretch (basic residues) spans Gln-101–Lys-123.

Belongs to the universal ribosomal protein uS13 family. As to quaternary structure, part of the 30S ribosomal subunit. Forms a loose heterodimer with protein S19. Forms two bridges to the 50S subunit in the 70S ribosome.

In terms of biological role, located at the top of the head of the 30S subunit, it contacts several helices of the 16S rRNA. In the 70S ribosome it contacts the 23S rRNA (bridge B1a) and protein L5 of the 50S subunit (bridge B1b), connecting the 2 subunits; these bridges are implicated in subunit movement. Contacts the tRNAs in the A and P-sites. The sequence is that of Small ribosomal subunit protein uS13 from Acetivibrio thermocellus (strain ATCC 27405 / DSM 1237 / JCM 9322 / NBRC 103400 / NCIMB 10682 / NRRL B-4536 / VPI 7372) (Clostridium thermocellum).